The chain runs to 251 residues: Hydroxyacylglutathione hydrolase (251 aa).

7 residues coordinate Zn(2+): His-53, His-55, Asp-57, His-58, His-110, Asp-127, and His-165.

Belongs to the metallo-beta-lactamase superfamily. Glyoxalase II family. Monomer. Zn(2+) serves as cofactor.

It carries out the reaction an S-(2-hydroxyacyl)glutathione + H2O = a 2-hydroxy carboxylate + glutathione + H(+). The protein operates within secondary metabolite metabolism; methylglyoxal degradation; (R)-lactate from methylglyoxal: step 2/2. In terms of biological role, thiolesterase that catalyzes the hydrolysis of S-D-lactoyl-glutathione to form glutathione and D-lactic acid. This is Hydroxyacylglutathione hydrolase from Escherichia coli (strain 55989 / EAEC).